We begin with the raw amino-acid sequence, 339 residues long: Glycerol-3-phosphate dehydrogenase [NAD(P)+] (339 aa).

Positions 15, 16, 36, and 110 each coordinate NADPH. Sn-glycerol 3-phosphate-binding residues include Lys-110, Gly-139, and Thr-141. Ala-143 is an NADPH binding site. Residues Lys-195, Asp-248, Ser-258, Arg-259, and Asn-260 each contribute to the sn-glycerol 3-phosphate site. Lys-195 acts as the Proton acceptor in catalysis. Arg-259 contributes to the NADPH binding site. Val-283 and Glu-285 together coordinate NADPH.

The protein belongs to the NAD-dependent glycerol-3-phosphate dehydrogenase family.

It is found in the cytoplasm. The catalysed reaction is sn-glycerol 3-phosphate + NAD(+) = dihydroxyacetone phosphate + NADH + H(+). It carries out the reaction sn-glycerol 3-phosphate + NADP(+) = dihydroxyacetone phosphate + NADPH + H(+). It participates in membrane lipid metabolism; glycerophospholipid metabolism. Functionally, catalyzes the reduction of the glycolytic intermediate dihydroxyacetone phosphate (DHAP) to sn-glycerol 3-phosphate (G3P), the key precursor for phospholipid synthesis. This Klebsiella pneumoniae (strain 342) protein is Glycerol-3-phosphate dehydrogenase [NAD(P)+].